Consider the following 265-residue polypeptide: Shikimate dehydrogenase (NADP(+)) (265 aa).

Shikimate is bound by residues 15–17 (SLS) and T62. K66 acts as the Proton acceptor in catalysis. Residues N87 and D102 each coordinate shikimate. Residues 125 to 129 (GAGGA), 149 to 154 (NRTLEK), and L209 each bind NADP(+). Y211 serves as a coordination point for shikimate. Residue G233 participates in NADP(+) binding.

Belongs to the shikimate dehydrogenase family. As to quaternary structure, homodimer.

It catalyses the reaction shikimate + NADP(+) = 3-dehydroshikimate + NADPH + H(+). The protein operates within metabolic intermediate biosynthesis; chorismate biosynthesis; chorismate from D-erythrose 4-phosphate and phosphoenolpyruvate: step 4/7. In terms of biological role, involved in the biosynthesis of the chorismate, which leads to the biosynthesis of aromatic amino acids. Catalyzes the reversible NADPH linked reduction of 3-dehydroshikimate (DHSA) to yield shikimate (SA). The polypeptide is Shikimate dehydrogenase (NADP(+)) (Legionella pneumophila (strain Corby)).